A 290-amino-acid chain; its full sequence is Signal peptidase I (290 aa).

At 1 to 13 the chain is on the cytoplasmic side; sequence MKFLRSVYAFCSS. Residues 14-34 traverse the membrane as a helical segment; sequence WVGTIVIVLLVIFFIAQAFII. Over 35–290 the chain is Extracellular; that stretch reads PSRSMVGTLY…KIIKKENATH (256 aa). Residues Ser38 and Lys106 contribute to the active site.

The protein belongs to the peptidase S26 family.

Its subcellular location is the cell membrane. The enzyme catalyses Cleavage of hydrophobic, N-terminal signal or leader sequences from secreted and periplasmic proteins.. The polypeptide is Signal peptidase I (lepB) (Helicobacter pylori (strain ATCC 700392 / 26695) (Campylobacter pylori)).